The chain runs to 246 residues: Eukaryotic translation initiation factor 6 (246 aa).

Residues Ser174 and Ser175 each carry the phosphoserine; by CK1 modification.

It belongs to the eIF-6 family. Monomer. Associates with the 60S ribosomal subunit. Phosphorylation at Ser-174 and Ser-175 promotes nuclear export.

The protein localises to the cytoplasm. The protein resides in the nucleus. Its subcellular location is the nucleolus. Its function is as follows. Binds to the 60S ribosomal subunit and prevents its association with the 40S ribosomal subunit to form the 80S initiation complex in the cytoplasm. Is also involved in ribosome biogenesis. Associates with pre-60S subunits in the nucleus and is involved in its nuclear export. The sequence is that of Eukaryotic translation initiation factor 6 from Verticillium alfalfae (strain VaMs.102 / ATCC MYA-4576 / FGSC 10136) (Verticillium wilt of alfalfa).